Reading from the N-terminus, the 227-residue chain is Probable methylthioribulose-1-phosphate dehydratase (227 aa).

Residue Cys-87 participates in substrate binding. His-105 and His-107 together coordinate Zn(2+). Catalysis depends on Glu-129, which acts as the Proton donor/acceptor. Zn(2+) is bound at residue His-185.

Belongs to the aldolase class II family. MtnB subfamily. Zn(2+) is required as a cofactor.

It is found in the cytoplasm. It carries out the reaction 5-(methylsulfanyl)-D-ribulose 1-phosphate = 5-methylsulfanyl-2,3-dioxopentyl phosphate + H2O. It participates in amino-acid biosynthesis; L-methionine biosynthesis via salvage pathway; L-methionine from S-methyl-5-thio-alpha-D-ribose 1-phosphate: step 2/6. In terms of biological role, catalyzes the dehydration of methylthioribulose-1-phosphate (MTRu-1-P) into 2,3-diketo-5-methylthiopentyl-1-phosphate (DK-MTP-1-P). In Drosophila melanogaster (Fruit fly), this protein is Probable methylthioribulose-1-phosphate dehydratase.